Reading from the N-terminus, the 189-residue chain is Transcription factor E (189 aa).

One can recognise an HTH TFE/IIEalpha-type domain in the interval 9 to 101 (AVKSLEIYVR…FWRIDSDTIN (93 aa)).

Belongs to the TFE family. In terms of assembly, monomer. Interaction with RNA polymerase subunits RpoF and RpoE is necessary for Tfe stimulatory transcription activity. Able to interact with Tbp and RNA polymerase in the absence of DNA promoter. Interacts both with the preinitiation and elongation complexes.

Transcription factor that plays a role in the activation of archaeal genes transcribed by RNA polymerase. Facilitates transcription initiation by enhancing TATA-box recognition by TATA-box-binding protein (Tbp), and transcription factor B (Tfb) and RNA polymerase recruitment. Not absolutely required for transcription in vitro, but particularly important in cases where Tbp or Tfb function is not optimal. It dynamically alters the nucleic acid-binding properties of RNA polymerases by stabilizing the initiation complex and destabilizing elongation complexes. Seems to translocate with the RNA polymerase following initiation and acts by binding to the non template strand of the transcription bubble in elongation complexes. The protein is Transcription factor E of Aeropyrum pernix (strain ATCC 700893 / DSM 11879 / JCM 9820 / NBRC 100138 / K1).